The primary structure comprises 372 residues: Anhydro-N-acetylmuramic acid kinase (372 aa).

Residue 18 to 25 participates in ATP binding; sequence GTSLDGID.

Belongs to the anhydro-N-acetylmuramic acid kinase family.

It catalyses the reaction 1,6-anhydro-N-acetyl-beta-muramate + ATP + H2O = N-acetyl-D-muramate 6-phosphate + ADP + H(+). It functions in the pathway amino-sugar metabolism; 1,6-anhydro-N-acetylmuramate degradation. The protein operates within cell wall biogenesis; peptidoglycan recycling. In terms of biological role, catalyzes the specific phosphorylation of 1,6-anhydro-N-acetylmuramic acid (anhMurNAc) with the simultaneous cleavage of the 1,6-anhydro ring, generating MurNAc-6-P. Is required for the utilization of anhMurNAc either imported from the medium or derived from its own cell wall murein, and thus plays a role in cell wall recycling. In Thiobacillus denitrificans (strain ATCC 25259 / T1), this protein is Anhydro-N-acetylmuramic acid kinase.